A 461-amino-acid polypeptide reads, in one-letter code: Fumarate hydratase class II (461 aa).

Substrate contacts are provided by residues 97 to 99, 127 to 130, 137 to 139, and Thr185; these read SGT, HPND, and SSN. Residue His186 is the Proton donor/acceptor of the active site. The active site involves Ser316. Residues Ser317 and 322–324 contribute to the substrate site; that span reads KVN.

The protein belongs to the class-II fumarase/aspartase family. Fumarase subfamily. In terms of assembly, homotetramer.

The protein resides in the cytoplasm. It catalyses the reaction (S)-malate = fumarate + H2O. It functions in the pathway carbohydrate metabolism; tricarboxylic acid cycle; (S)-malate from fumarate: step 1/1. Functionally, involved in the TCA cycle. Catalyzes the stereospecific interconversion of fumarate to L-malate. This chain is Fumarate hydratase class II, found in Oceanobacillus iheyensis (strain DSM 14371 / CIP 107618 / JCM 11309 / KCTC 3954 / HTE831).